The sequence spans 371 residues: Peptide chain release factor 2 (371 aa).

Glutamine 253 is subject to N5-methylglutamine.

The protein belongs to the prokaryotic/mitochondrial release factor family. In terms of processing, methylated by PrmC. Methylation increases the termination efficiency of RF2.

It is found in the cytoplasm. Its function is as follows. Peptide chain release factor 2 directs the termination of translation in response to the peptide chain termination codons UGA and UAA. The sequence is that of Peptide chain release factor 2 from Mycobacterium sp. (strain KMS).